The sequence spans 182 residues: Isopentenyl-diphosphate Delta-isomerase (182 aa).

2 residues coordinate Mn(2+): His-23 and His-30. A Nudix hydrolase domain is found at 28 to 162 (PRHLAFSCHV…PWAFSPWLVE (135 aa)). Cys-65 is an active-site residue. A Mg(2+)-binding site is contributed by Cys-65. Residue His-67 coordinates Mn(2+). Glu-85 is a binding site for Mg(2+). Residues Glu-112 and Glu-114 each contribute to the Mn(2+) site. Residue Glu-114 is part of the active site.

It belongs to the IPP isomerase type 1 family. Requires Mg(2+) as cofactor. Mn(2+) is required as a cofactor.

The protein resides in the cytoplasm. The catalysed reaction is isopentenyl diphosphate = dimethylallyl diphosphate. Its pathway is isoprenoid biosynthesis; dimethylallyl diphosphate biosynthesis; dimethylallyl diphosphate from isopentenyl diphosphate: step 1/1. Its function is as follows. Catalyzes the 1,3-allylic rearrangement of the homoallylic substrate isopentenyl (IPP) to its highly electrophilic allylic isomer, dimethylallyl diphosphate (DMAPP). In Brevibacterium linens, this protein is Isopentenyl-diphosphate Delta-isomerase.